The following is a 214-amino-acid chain: uncharacterized protein (214 aa).

5 consecutive transmembrane segments (helical) span residues 33-53 (VILF…ILVV), 104-124 (ILGI…SYVL), 132-152 (FIYL…LSAS), 153-173 (GGVL…FGTK), and 186-206 (LLIL…TITF).

Its subcellular location is the cell membrane. This is an uncharacterized protein from Methanocaldococcus jannaschii (strain ATCC 43067 / DSM 2661 / JAL-1 / JCM 10045 / NBRC 100440) (Methanococcus jannaschii).